The following is a 394-amino-acid chain: Elongation factor Tu (394 aa).

A tr-type G domain is found at Lys10–Val204. The segment at Gly19 to Thr26 is G1. Gly19–Thr26 serves as a coordination point for GTP. Thr26 is a Mg(2+) binding site. Positions Gly60–Ser64 are G2. The interval Asp81–Gly84 is G3. GTP is bound by residues Asp81 to His85 and Asn136 to Asp139. Residues Asn136–Asp139 form a G4 region. The G5 stretch occupies residues Ser174–Leu176.

The protein belongs to the TRAFAC class translation factor GTPase superfamily. Classic translation factor GTPase family. EF-Tu/EF-1A subfamily. In terms of assembly, monomer.

It localises to the cytoplasm. It carries out the reaction GTP + H2O = GDP + phosphate + H(+). In terms of biological role, GTP hydrolase that promotes the GTP-dependent binding of aminoacyl-tRNA to the A-site of ribosomes during protein biosynthesis. The chain is Elongation factor Tu from Rickettsia canadensis (strain McKiel).